Here is a 124-residue protein sequence, read N- to C-terminus: Trophoblast-specific protein alpha (124 aa).

A signal peptide spans Met1–Val18. Disordered regions lie at residues Lys51 to Leu74 and Phe91 to Gln124. The span at Glu62–Leu74 shows a compositional bias: polar residues. A compositionally biased stretch (acidic residues) spans Asp103–Glu112.

The protein resides in the secreted. Its subcellular location is the extracellular space. It may be a growth factor/hormone, perhaps involved in interaction between the maternal and fetal systems in maintenance of pregnancy. The chain is Trophoblast-specific protein alpha (Tpbpa) from Mus musculus (Mouse).